The sequence spans 205 residues: Ypt/Rab-type GTPase ypt7 (205 aa).

GTP-binding positions include 17–23 (SGVGKTS), 33–40 (FSASYKAT), G66, 125–128 (NKID), and 157–159 (SAK). The Effector region motif lies at 37–45 (YKATIGADF). Residues C203 and C205 are each lipidated (S-geranylgeranyl cysteine). Residue C205 is modified to Cysteine methyl ester.

This sequence belongs to the small GTPase superfamily. Rab family. Interacts with the Rab GDP dissociation inhibitor GDI1.

The protein resides in the vacuole. With respect to regulation, rab activation is generally mediated by a guanine exchange factor (GEF), while inactivation through hydrolysis of bound GTP is catalyzed by a GTPase activating protein (GAP). In terms of biological role, ypt/Rab-type GTPases are key regulators of membrane trafficking and intracellular vesicular transport. They act as molecular switches that convert between GTP-bound and GDP-bound states, and regulate virtually all steps of membrane traffic from the formation of the transport vesicle at the donor membrane to its fusion at the target membrane. In the GDP-bound state, Ypt proteins are predominantly cytosolic, solubilized through the interaction with a GDP dissociation inhibitor (GDI). In the GTP-bound state, the proteins are membrane bound and interact with specific effector proteins that select cargo, promote vesicle movement, or verify the correct site of fusion. Required for fungal morphogenesis, vacuole fusion, autophagy, stress resistance and pathogenicity. In Pyricularia oryzae (strain 70-15 / ATCC MYA-4617 / FGSC 8958) (Rice blast fungus), this protein is Ypt/Rab-type GTPase ypt7.